A 263-amino-acid chain; its full sequence is Regulatory protein RecX (263 aa).

This sequence belongs to the RecX family.

It is found in the cytoplasm. Its function is as follows. Modulates RecA activity. In Bacillus licheniformis (strain ATCC 14580 / DSM 13 / JCM 2505 / CCUG 7422 / NBRC 12200 / NCIMB 9375 / NCTC 10341 / NRRL NRS-1264 / Gibson 46), this protein is Regulatory protein RecX.